A 160-amino-acid polypeptide reads, in one-letter code: SsrA-binding protein (160 aa).

Residues 132–160 (KEFDKRDTVRERDSNRELQRTMRNKGKEE) are disordered.

It belongs to the SmpB family.

The protein localises to the cytoplasm. Required for rescue of stalled ribosomes mediated by trans-translation. Binds to transfer-messenger RNA (tmRNA), required for stable association of tmRNA with ribosomes. tmRNA and SmpB together mimic tRNA shape, replacing the anticodon stem-loop with SmpB. tmRNA is encoded by the ssrA gene; the 2 termini fold to resemble tRNA(Ala) and it encodes a 'tag peptide', a short internal open reading frame. During trans-translation Ala-aminoacylated tmRNA acts like a tRNA, entering the A-site of stalled ribosomes, displacing the stalled mRNA. The ribosome then switches to translate the ORF on the tmRNA; the nascent peptide is terminated with the 'tag peptide' encoded by the tmRNA and targeted for degradation. The ribosome is freed to recommence translation, which seems to be the essential function of trans-translation. The sequence is that of SsrA-binding protein from Pseudomonas entomophila (strain L48).